The chain runs to 195 residues: Imidazoleglycerol-phosphate dehydratase (195 aa).

It belongs to the imidazoleglycerol-phosphate dehydratase family.

The protein localises to the cytoplasm. The enzyme catalyses D-erythro-1-(imidazol-4-yl)glycerol 3-phosphate = 3-(imidazol-4-yl)-2-oxopropyl phosphate + H2O. Its pathway is amino-acid biosynthesis; L-histidine biosynthesis; L-histidine from 5-phospho-alpha-D-ribose 1-diphosphate: step 6/9. This is Imidazoleglycerol-phosphate dehydratase from Geobacillus sp. (strain WCH70).